Here is a 156-residue protein sequence, read N- to C-terminus: Small ribosomal subunit protein uS7 (156 aa).

Belongs to the universal ribosomal protein uS7 family. In terms of assembly, part of the 30S ribosomal subunit. Contacts proteins S9 and S11.

In terms of biological role, one of the primary rRNA binding proteins, it binds directly to 16S rRNA where it nucleates assembly of the head domain of the 30S subunit. Is located at the subunit interface close to the decoding center, probably blocks exit of the E-site tRNA. This chain is Small ribosomal subunit protein uS7, found in Crocosphaera subtropica (strain ATCC 51142 / BH68) (Cyanothece sp. (strain ATCC 51142)).